Reading from the N-terminus, the 443-residue chain is dTDP-4-dehydro-6-deoxy-alpha-D-glucopyranose 2,3-dehydratase (443 aa).

Residues Trp-35, Thr-118 to Tyr-122, Ser-157, Trp-260, Arg-325, Gln-341 to Asn-343, Asn-346 to Leu-347, and Glu-377 to Arg-380 contribute to the dTDP-4-dehydro-6-deoxy-alpha-D-glucose site.

The protein belongs to the hexose 2,3-dehydratase family. In terms of assembly, homodimer.

It catalyses the reaction dTDP-4-dehydro-6-deoxy-alpha-D-glucose = dTDP-3,4-didehydro-2,6-dideoxy-alpha-D-glucose + H2O. It functions in the pathway antibiotic biosynthesis; granaticin biosynthesis. Functionally, involved in the biosynthesis of the 2,6-deoxysugar, dTDP-L-rhodinose, attached to the benzoisochromane quinone chromophore to produce the aglycone antibiotics granaticin and granaticin B. Catalyzes the removal of the hydroxyl group at position C-2 of the hexose ring of dTDP-4-dehydro-6-deoxy-alpha-D-glucopyranose, and the oxidation of the hydroxyl group at position C-3 to form a carbonyl functionality. The product of the reaction, dTDP-2,6-dideoxy-D-glycero-hex-2-enos-4-ulose, is a highly unstable diketosugar, which spontaneously forms dTDP-3,4-didehydro-2,6-dideoxy-alpha-D-glucose. The chain is dTDP-4-dehydro-6-deoxy-alpha-D-glucopyranose 2,3-dehydratase from Streptomyces violaceoruber.